We begin with the raw amino-acid sequence, 203 residues long: Thymidylate kinase (203 aa).

ATP is bound at residue 10–17 (GVEGSGKT).

Belongs to the thymidylate kinase family.

The catalysed reaction is dTMP + ATP = dTDP + ADP. Phosphorylation of dTMP to form dTDP in both de novo and salvage pathways of dTTP synthesis. The chain is Thymidylate kinase from Carboxydothermus hydrogenoformans (strain ATCC BAA-161 / DSM 6008 / Z-2901).